We begin with the raw amino-acid sequence, 623 residues long: Membrane protein insertase YidC (623 aa).

5 helical membrane passes run 8-28 (LILATGLSFLVIMVWFFLFPP), 379-399 (MGLAIIALTFLLKALVLPLAY), 449-469 (LPILIQIPIFFSLYKVIFVTI), 507-527 (TTMALIFIGALPILLGVSMWL), and 543-563 (IFAWMPWVFMFMLGHFASGLV). Residues 601–617 (KPAAQPAGKAANDGAAP) show a composition bias toward low complexity. The tract at residues 601–623 (KPAAQPAGKAANDGAAPAKKRKP) is disordered.

The protein belongs to the OXA1/ALB3/YidC family. Type 1 subfamily. As to quaternary structure, interacts with the Sec translocase complex via SecD. Specifically interacts with transmembrane segments of nascent integral membrane proteins during membrane integration.

The protein resides in the cell inner membrane. Required for the insertion and/or proper folding and/or complex formation of integral membrane proteins into the membrane. Involved in integration of membrane proteins that insert both dependently and independently of the Sec translocase complex, as well as at least some lipoproteins. Aids folding of multispanning membrane proteins. This Cereibacter sphaeroides (strain ATCC 17029 / ATH 2.4.9) (Rhodobacter sphaeroides) protein is Membrane protein insertase YidC.